The following is a 376-amino-acid chain: UPF0284 protein glr4139 (376 aa).

This sequence belongs to the UPF0284 family.

This chain is UPF0284 protein glr4139, found in Gloeobacter violaceus (strain ATCC 29082 / PCC 7421).